A 206-amino-acid polypeptide reads, in one-letter code: Recombination protein RecR (206 aa).

The C4-type zinc-finger motif lies at 60 to 75; it reads CAMCNTFCEGGLCDIC. The Toprim domain maps to 83–178; sequence RRLMVVHMPA…KVSRLSQGIP (96 aa).

It belongs to the RecR family.

In terms of biological role, may play a role in DNA repair. It seems to be involved in an RecBC-independent recombinational process of DNA repair. It may act with RecF and RecO. In Neisseria meningitidis serogroup B (strain ATCC BAA-335 / MC58), this protein is Recombination protein RecR.